The primary structure comprises 573 residues: Urease subunit alpha (573 aa).

The Urease domain maps to 136–573 (GAIDCHVHFI…LPMAQRYFLF (438 aa)). Ni(2+)-binding residues include H141, H143, and K224. K224 is modified (N6-carboxylysine). H226 provides a ligand contact to substrate. Ni(2+) is bound by residues H253 and H279. H327 acts as the Proton donor in catalysis. D367 contacts Ni(2+).

It belongs to the metallo-dependent hydrolases superfamily. Urease alpha subunit family. In terms of assembly, heterotrimer of UreA (gamma), UreB (beta) and UreC (alpha) subunits. Three heterotrimers associate to form the active enzyme. The cofactor is Ni cation. In terms of processing, carboxylation allows a single lysine to coordinate two nickel ions.

The protein localises to the cytoplasm. The enzyme catalyses urea + 2 H2O + H(+) = hydrogencarbonate + 2 NH4(+). Its pathway is nitrogen metabolism; urea degradation; CO(2) and NH(3) from urea (urease route): step 1/1. This is Urease subunit alpha from Nocardia farcinica (strain IFM 10152).